Consider the following 132-residue polypeptide: Spermatogenesis-associated protein 33 (132 aa).

The segment at 1-60 (MGQSKSKPREKKEEEKSTTTLVTKSKEKVMEKEAKQSDKESQPAESLLFATSKHSRPSSS) is interaction with ATG16L1. The disordered stretch occupies residues 1-81 (MGQSKSKPRE…SKKRSVIPQI (81 aa)). A compositionally biased stretch (basic and acidic residues) spans 24–42 (KSKEKVMEKEAKQSDKESQ). The interval 61–132 (SEDKPETKQR…IAAYDVHNTE (72 aa)) is interaction with VDAC2. The PQIIIT signature appears at 79–84 (PQIIIT). Ser-87 is subject to Phosphoserine. The interval 110–132 (DWGPYHRHRSPSTIAAYDVHNTE) is disordered.

Interacts (via PQIIIT motif) with PPP3R2 and PPP3CC. Interacts with VDAC2. Interacts with ATG16L1 (via WD repeats). Interacts with PPP3R1, PPP3CA and PPP3CB. In terms of tissue distribution, predominantly expressed in the testis (at protein level). Expressed in the sperm midpiece (at protein level).

It localises to the cytoplasm. The protein localises to the cytosol. Its subcellular location is the nucleus. It is found in the mitochondrion. Plays an important role in sperm motility and male fertility. Required for sperm midpiece flexibility and for the localization of sperm calcineurin to the mitochondria. Promotes mitophagy as well as acts as an autophagy mediator in male germline cells. Links damaged mitochondria to autophagosomes via its binding to the outer mitochondrial membrane protein VDAC2, as well as to key autophagy machinery component ATG16L1. This chain is Spermatogenesis-associated protein 33 (Spata33), found in Mus musculus (Mouse).